Here is a 590-residue protein sequence, read N- to C-terminus: Beta-(1--&gt;2)glucan export ATP-binding/permease protein NdvA (590 aa).

An ABC transmembrane type-1 domain is found at 21–301 (VALICGANVA…MSAFANQISE (281 aa)). 6 consecutive transmembrane segments (helical) span residues 22–42 (ALIC…PIMF), 55–75 (VFST…AFVL), 136–156 (QHLS…SMDV), 158–178 (MSMV…LVMK), 248–268 (LSST…VTHG), and 275–295 (VIAF…MSAF). The ABC transporter domain maps to 335–569 (VRFEDVGFEF…NGRFASLLRA (235 aa)). ATP is bound at residue 368 to 375 (GPTGAGKT).

It belongs to the ABC transporter superfamily. Beta-(1--&gt;2)glucan exporter (TC 3.A.1.108.1) family. As to quaternary structure, homodimer.

The protein resides in the cell inner membrane. The catalysed reaction is [(1-&gt;2)-beta-D-glucosyl](n)(in) + ATP + H2O = [(1-&gt;2)-beta-D-glucosyl](n)(out) + ADP + phosphate + H(+). Involved in beta-(1--&gt;2)glucan export. Transmembrane domains (TMD) form a pore in the inner membrane and the ATP-binding domain (NBD) is responsible for energy generation. This Mesorhizobium japonicum (strain LMG 29417 / CECT 9101 / MAFF 303099) (Mesorhizobium loti (strain MAFF 303099)) protein is Beta-(1--&gt;2)glucan export ATP-binding/permease protein NdvA.